Here is a 292-residue protein sequence, read N- to C-terminus: NAC domain-containing protein 96 (292 aa).

The NAC domain occupies 6 to 158 (LPPGFRFHPT…AFVLCRVAMK (153 aa)). Residues 106 to 164 (IGYRKTLVFYKGRAPLGDRSNWIMHEYRLCDDDTSQGSQNLKGAFVLCRVAMKNEIKTN) mediate DNA binding. The interval 171 to 199 (PSEQTIGSGESSGLSSRVTSPSRDETMPF) is disordered. A compositionally biased stretch (polar residues) spans 172–191 (SEQTIGSGESSGLSSRVTSP).

As to quaternary structure, interacts with ABF2 and ABF4. Expressed in roots, rosettes leaves, cauline leaves and stems.

It localises to the nucleus. In terms of biological role, transcriptional activator involved in the positive regulation of abscisic acid (ABA) responsive genes. Acts as a positive factor of ABA-mediated responses. Involved in the transcriptional activation of ABA-inducible genes in response to dehydration and osmotic stresses. Plays a positive role in both stomatal closure and water loss under dehydration stress conditions. Acts synergistically with ABF2 to activate the dehydration stress-response factor RD29A transcription. Binds to the consensus core cis-acting elements 5'-CGTA-3' and 5'-CACG-3' at the RD29A promoter. Involved in hypocotyl graft union formation. Required for the auxin-mediated promotion of vascular tissue proliferation during hypocotyl graft attachment. The protein is NAC domain-containing protein 96 of Arabidopsis thaliana (Mouse-ear cress).